Consider the following 206-residue polypeptide: MARYTGATCKLCRREGMKLFLKGDRCYTDKCAFVRRSYAPGQHGASRKKLSNYGTQLREKQKAKRIYGVLEGQFRNTYERAEKMRGIAGENLLKLLEMRLDNVVYRLGYGASRTEARQLVNHGHFLVNGKKVDIASFKVSVNDVITVCEKSRGSERFKMFAENPKALPKWLEANVENFEGKVVAEPAREDIDVPVNETLIVELYSK.

Residues 98-163 (MRLDNVVYRL…SERFKMFAEN (66 aa)) form the S4 RNA-binding domain.

This sequence belongs to the universal ribosomal protein uS4 family. In terms of assembly, part of the 30S ribosomal subunit. Contacts protein S5. The interaction surface between S4 and S5 is involved in control of translational fidelity.

One of the primary rRNA binding proteins, it binds directly to 16S rRNA where it nucleates assembly of the body of the 30S subunit. Functionally, with S5 and S12 plays an important role in translational accuracy. The sequence is that of Small ribosomal subunit protein uS4A from Clostridium perfringens (strain ATCC 13124 / DSM 756 / JCM 1290 / NCIMB 6125 / NCTC 8237 / Type A).